A 422-amino-acid chain; its full sequence is F-box/FBD/LRR-repeat protein At5g56420 (422 aa).

The region spanning 5-54 (RDRLSQLPDDFLLQILSWLPTKDVLVTSLLSKRWRFLWTLVPRLNYDLRL) is the F-box domain. LRR repeat units lie at residues 59-85 (CPRF…NIKI), 136-163 (VLKL…HLLD), 164-189 (VKYL…VVQR), 193-212 (DNVK…SLHK), 214-238 (SQAF…DIED), 279-304 (LCLI…ELCT), and 305-330 (CAPR…KLRQ). The FBD domain maps to 342–391 (SWKQPALPKCLLFHLETFKWELYEGSQKQKEVATFILKHAIRLKTAIISP).

This chain is F-box/FBD/LRR-repeat protein At5g56420, found in Arabidopsis thaliana (Mouse-ear cress).